The sequence spans 40 residues: Cytolysin EnT (40 aa).

The plays an important role in the hemolytic activity stretch occupies residues 3 to 12 (ALAGTIIEGA). An N-terminal region region spans residues 11–30 (GASLTFSVLTTILDALGSVS).

Belongs to the actinoporin family. Sea anemone subfamily. In terms of assembly, octamer or nonamer in membranes. Monomer in the soluble state.

The protein localises to the secreted. The protein resides in the nematocyst. It is found in the target cell membrane. In terms of biological role, pore-forming protein that forms cations-selective hydrophilic pores of around 1 nm and causes cytolysis. Pore formation is a multi-step process that involves specific recognition of membrane sphingomyelin (but neither cholesterol nor phosphatidylcholine) using aromatic rich region and adjacent phosphocholine (POC) binding site, firm binding to the membrane (mainly driven by hydrophobic interactions) accompanied by the transfer of the N-terminal region to the lipid-water interface and finally pore formation after oligomerization of monomers. This toxin shows hemolytic activities. The polypeptide is Cytolysin EnT (Entacmaea quadricolor (Bubble-tip anemone)).